A 457-amino-acid chain; its full sequence is Multidrug resistance protein MdtK (457 aa).

Helical transmembrane passes span 11 to 31 (LLAL…MGFV), 53 to 73 (IWLP…PVIA), 93 to 113 (WLAG…GYII), 127 to 147 (AVGY…FQVA), 160 to 180 (GMVM…IFIY), 189 to 209 (GGVG…LAMV), 243 to 263 (LPIA…ALLV), 276 to 296 (IALN…AAVT), 314 to 334 (AART…IFTV), 350 to 370 (VVTL…SDSI), 387 to 407 (IFYI…YILA), and 418 to 438 (PAGF…MMML).

Belongs to the multi antimicrobial extrusion (MATE) (TC 2.A.66.1) family. MdtK subfamily.

Its subcellular location is the cell inner membrane. In terms of biological role, multidrug efflux pump that functions probably as a Na(+)/drug antiporter. The protein is Multidrug resistance protein MdtK of Escherichia coli O9:H4 (strain HS).